A 186-amino-acid chain; its full sequence is Protein C (186 aa).

Positions 1-15 are enriched in polar residues; it reads MSKTDWNASGLSRPS. The interval 1–44 is disordered; the sequence is MSKTDWNASGLSRPSPSAHWPSRKLWQHGQKYQTTQDRSEPPAG.

It belongs to the morbillivirus protein C family. Interacts with the phosphoprotein (via C-terminus); this interaction allows C to associate with the ribonucleocapsid.

The protein resides in the host nucleus. The protein localises to the host cytoplasmic vesicle. In terms of biological role, ribonucleocapsid-associated protein that interacts with the phosphoprotein (P), thereby increasing replication accuracy and processivity of the polymerase complex. The polypeptide is Protein C (P/V/C) (Homo sapiens (Human)).